Consider the following 264-residue polypeptide: tRNA (guanine-N(1)-)-methyltransferase (264 aa).

S-adenosyl-L-methionine is bound by residues G125 and 145–150; that span reads LGDFVL.

The protein belongs to the RNA methyltransferase TrmD family. Homodimer.

The protein localises to the cytoplasm. It carries out the reaction guanosine(37) in tRNA + S-adenosyl-L-methionine = N(1)-methylguanosine(37) in tRNA + S-adenosyl-L-homocysteine + H(+). Functionally, specifically methylates guanosine-37 in various tRNAs. The polypeptide is tRNA (guanine-N(1)-)-methyltransferase (Burkholderia mallei (strain NCTC 10247)).